The chain runs to 86 residues: HssA/B-like protein 60 (86 aa).

The interval 11 to 33 (GNIKSSSKSNIASSSSSSSSQSL) is disordered.

The protein belongs to the hssA/B family.

In Dictyostelium discoideum (Social amoeba), this protein is HssA/B-like protein 60 (hssl60).